The following is a 60-amino-acid chain: L-amino-acid oxidase (60 aa).

Residue 1 to 4 (GPMR) coordinates FAD. Arginine 4 serves as a coordination point for substrate.

Belongs to the flavin monoamine oxidase family. FIG1 subfamily. As to quaternary structure, homodimer; non-covalently linked. FAD serves as cofactor. Post-translationally, contains 2 disulfide bonds. N-glycosylated. As to expression, expressed by the venom gland.

The protein resides in the secreted. It catalyses the reaction an L-alpha-amino acid + O2 + H2O = a 2-oxocarboxylate + H2O2 + NH4(+). In terms of biological role, catalyzes an oxidative deamination of predominantly hydrophobic and aromatic L-amino acids, thus producing hydrogen peroxide that may contribute to the diverse toxic effects of this enzyme. Exhibits diverse biological activities, such as hemorrhage, hemolysis, edema, apoptosis of vascular endothelial cells or tumor cell lines, antibacterial and antiparasitic activities, as well as regulation of platelet aggregation. Effects of snake L-amino oxidases on platelets are controversial, since they either induce aggregation or inhibit agonist-induced aggregation. These different effects are probably due to different experimental conditions. This Bitis gabonica (Gaboon adder) protein is L-amino-acid oxidase.